The chain runs to 346 residues: tRNA pseudouridine synthase D (346 aa).

The Nucleophile role is filled by aspartate 81. One can recognise a TRUD domain in the interval 157 to 303 (GVPNYFGLQR…MKHERRILRL (147 aa)).

Belongs to the pseudouridine synthase TruD family.

It carries out the reaction uridine(13) in tRNA = pseudouridine(13) in tRNA. In terms of biological role, responsible for synthesis of pseudouridine from uracil-13 in transfer RNAs. The polypeptide is tRNA pseudouridine synthase D (Stutzerimonas stutzeri (strain A1501) (Pseudomonas stutzeri)).